Consider the following 544-residue polypeptide: Methionine--tRNA ligase 2 (544 aa).

The 'HIGH' region motif lies at 10-20 (PYANGSLHLGH). Zn(2+)-binding residues include C141, C144, C153, and C156. Residues 329-333 (KLSTS) carry the 'KMSKS' region motif. Residue T332 coordinates ATP.

This sequence belongs to the class-I aminoacyl-tRNA synthetase family. MetG type 1 subfamily. As to quaternary structure, monomer. The cofactor is Zn(2+).

The protein resides in the cytoplasm. The enzyme catalyses tRNA(Met) + L-methionine + ATP = L-methionyl-tRNA(Met) + AMP + diphosphate. Its function is as follows. Is required not only for elongation of protein synthesis but also for the initiation of all mRNA translation through initiator tRNA(fMet) aminoacylation. This chain is Methionine--tRNA ligase 2, found in Bacillus cereus (strain ATCC 14579 / DSM 31 / CCUG 7414 / JCM 2152 / NBRC 15305 / NCIMB 9373 / NCTC 2599 / NRRL B-3711).